Here is a 420-residue protein sequence, read N- to C-terminus: Gamma-glutamyl phosphate reductase (420 aa).

The protein belongs to the gamma-glutamyl phosphate reductase family.

The protein resides in the cytoplasm. The catalysed reaction is L-glutamate 5-semialdehyde + phosphate + NADP(+) = L-glutamyl 5-phosphate + NADPH + H(+). The protein operates within amino-acid biosynthesis; L-proline biosynthesis; L-glutamate 5-semialdehyde from L-glutamate: step 2/2. Catalyzes the NADPH-dependent reduction of L-glutamate 5-phosphate into L-glutamate 5-semialdehyde and phosphate. The product spontaneously undergoes cyclization to form 1-pyrroline-5-carboxylate. The protein is Gamma-glutamyl phosphate reductase of Neisseria meningitidis serogroup C / serotype 2a (strain ATCC 700532 / DSM 15464 / FAM18).